We begin with the raw amino-acid sequence, 275 residues long: Secreted RxLR effector protein 153 (275 aa).

The first 27 residues, Met-1–Ala-27, serve as a signal peptide directing secretion. Asn-45 is a glycosylation site (N-linked (GlcNAc...) asparagine). Positions Arg-48–Arg-63 match the RxLR-dEER motif.

This sequence belongs to the RxLR effector family.

It localises to the secreted. The protein resides in the host cell membrane. In terms of biological role, secreted effector that completely suppresses the host cell death induced by cell death-inducing proteins. The chain is Secreted RxLR effector protein 153 from Plasmopara viticola (Downy mildew of grapevine).